The sequence spans 466 residues: Coagulation factor VII (466 aa).

Positions 1 to 20 (MVSQALRLLCLLLGLQGCLA) are cleaved as a signal peptide. A propeptide spanning residues 21–60 (AGGVAKASGGETRDMPWKPGPHRVFVTQEEAHGVLHRRRR) is cleaved from the precursor. The region spanning 61–105 (ANAFLEELRPGSLERECKEEQCSFEEAREIFKDAERTKLFWISYS) is the Gla domain. 4-carboxyglutamate occurs at positions 66, 67, 74, 76, 79, 80, 85, 86, 89, and 95. Cys77 and Cys82 are joined by a disulfide. Positions 106–142 (DGDQCASSPCQNGGSCKDQLQSYICFCLPAFEGRNCE) constitute an EGF-like 1; calcium-binding domain. 10 cysteine pairs are disulfide-bonded: Cys110-Cys121, Cys115-Cys130, Cys132-Cys141, Cys151-Cys162, Cys158-Cys172, Cys174-Cys187, Cys195-Cys322, Cys219-Cys224, Cys238-Cys254, and Cys370-Cys389. Ser112 carries an O-linked (Glc...) serine; alternate glycan. Ser112 is a glycosylation site (O-linked (Xyl...) serine; alternate). The O-linked (Fuc) serine glycan is linked to Ser120. Asp123 carries the post-translational modification (3R)-3-hydroxyaspartate. In terms of domain architecture, EGF-like 2 spans 147-188 (DQLICVNENGGCEQYCSDHTGTKRSCRCHEGYSLLADGVSCT). A glycan (N-linked (GlcNAc...) asparagine) is linked at Asn205. The Peptidase S1 domain occupies 213 to 452 (IVGGKVCPKG…YIEWLQKLMR (240 aa)). Residues His253 and Asp302 each act as charge relay system in the active site. An N-linked (GlcNAc...) asparagine glycan is attached at Asn382. Residue Asp398 coordinates substrate. A disulfide bridge links Cys400 with Cys428. The active-site Charge relay system is Ser404.

This sequence belongs to the peptidase S1 family. In terms of assembly, heterodimer of a light chain and a heavy chain linked by a disulfide bond. Interacts (activated) with iripin-8, a serine protease inhibitor from Ixodes ricinus saliva. Post-translationally, the vitamin K-dependent, enzymatic carboxylation of some glutamate residues allows the modified protein to bind calcium. In terms of processing, the iron and 2-oxoglutarate dependent 3-hydroxylation of aspartate and asparagine is (R) stereospecific within EGF domains. O- and N-glycosylated. N-glycosylation at Asn-205 occurs cotranslationally and is mediated by STT3A-containing complexes, while glycosylation at Asn-382 is post-translational and is mediated STT3B-containing complexes before folding. O-fucosylated by POFUT1 on a conserved serine or threonine residue found in the consensus sequence C2-X(4,5)-[S/T]-C3 of EGF domains, where C2 and C3 are the second and third conserved cysteines. Post-translationally, can be either O-glucosylated or O-xylosylated at Ser-112 by POGLUT1 in vitro. As to expression, plasma.

Its subcellular location is the secreted. It carries out the reaction Selective cleavage of Arg-|-Ile bond in factor X to form factor Xa.. Initiates the extrinsic pathway of blood coagulation. Serine protease that circulates in the blood in a zymogen form. Factor VII is converted to factor VIIa by factor Xa, factor XIIa, factor IXa, or thrombin by minor proteolysis. In the presence of tissue factor and calcium ions, factor VIIa then converts factor X to factor Xa by limited proteolysis. Factor VIIa also converts factor IX to factor IXa in the presence of tissue factor and calcium. The polypeptide is Coagulation factor VII (F7) (Homo sapiens (Human)).